The following is a 447-amino-acid chain: Phosphoglucosamine mutase (447 aa).

Serine 101 (phosphoserine intermediate) is an active-site residue. Residues serine 101, aspartate 242, aspartate 244, and aspartate 246 each contribute to the Mg(2+) site. Serine 101 is modified (phosphoserine).

It belongs to the phosphohexose mutase family. Mg(2+) is required as a cofactor. Activated by phosphorylation.

It catalyses the reaction alpha-D-glucosamine 1-phosphate = D-glucosamine 6-phosphate. Its function is as follows. Catalyzes the conversion of glucosamine-6-phosphate to glucosamine-1-phosphate. The protein is Phosphoglucosamine mutase of Azorhizobium caulinodans (strain ATCC 43989 / DSM 5975 / JCM 20966 / LMG 6465 / NBRC 14845 / NCIMB 13405 / ORS 571).